The sequence spans 397 residues: LIM/homeobox protein Lhx3 (397 aa).

LIM zinc-binding domains are found at residues 31–81 (CAGC…CKDD) and 90–144 (CAAC…CKAD). Threonine 63 carries the phosphothreonine modification. Position 71 is a phosphoserine (serine 71). Residues 157 to 216 (AKRPRTTITAKQLETLKSAYNTSPKPARHVREQLSSETGLDMRVVQVWFQNRRAKEKRLK) constitute a DNA-binding region (homeobox). The interval 212–397 (EKRLKKDAGR…WLDEVDHAQF (186 aa)) is disordered. A Phosphotyrosine modification is found at tyrosine 227. 2 positions are modified to phosphoserine: serine 234 and serine 238. Positions 316–331 (GVPPSPAAPQSLPGPQ) are enriched in pro residues.

Interacts with POU1F1. At neuronal promoters, interacts with LDB1, in motor neurons LDB1 is displaced by ISL1 and a ternary complex is formed in which ISL1 contacts both LHX3 and LDB1; allosteric structural changes in the DNA binding domain of LHX3, induced by the ISL1-LHX3 interaction, may explain differences in sequence specificity of the different complexes. Interacts with LDB2. May interact with CITED2/MRG1.

It localises to the nucleus. Transcription factor. Recognizes and binds to the consensus sequence motif 5'-AATTAATTA-3' in the regulatory elements of target genes, such as glycoprotein hormones alpha chain CGA and visual system homeobox CHX10, positively modulating transcription; transcription can be co-activated by LDB2. Synergistically enhances transcription from the prolactin promoter in cooperation with POU1F1/Pit-1. Required for the establishment of the specialized cells of the pituitary gland and the nervous system. Involved in the development of interneurons and motor neurons in cooperation with LDB1 and ISL1. The polypeptide is LIM/homeobox protein Lhx3 (LHX3) (Homo sapiens (Human)).